The following is a 320-amino-acid chain: Thymidylate synthase (320 aa).

DUMP-binding positions include Arg27 and 182 to 183; that span reads RR. Cys202 serves as the catalytic Nucleophile. Residues 222–225, Asn233, and 263–265 each bind dUMP; these read RSAD and HIY. Position 225 (Asp225) interacts with (6R)-5,10-methylene-5,6,7,8-tetrahydrofolate. Position 319 (Ala319) interacts with (6R)-5,10-methylene-5,6,7,8-tetrahydrofolate.

Belongs to the thymidylate synthase family. Bacterial-type ThyA subfamily. Homodimer.

The protein localises to the cytoplasm. The catalysed reaction is dUMP + (6R)-5,10-methylene-5,6,7,8-tetrahydrofolate = 7,8-dihydrofolate + dTMP. It functions in the pathway pyrimidine metabolism; dTTP biosynthesis. Its function is as follows. Catalyzes the reductive methylation of 2'-deoxyuridine-5'-monophosphate (dUMP) to 2'-deoxythymidine-5'-monophosphate (dTMP) while utilizing 5,10-methylenetetrahydrofolate (mTHF) as the methyl donor and reductant in the reaction, yielding dihydrofolate (DHF) as a by-product. This enzymatic reaction provides an intracellular de novo source of dTMP, an essential precursor for DNA biosynthesis. This chain is Thymidylate synthase, found in Limosilactobacillus reuteri (strain DSM 20016) (Lactobacillus reuteri).